We begin with the raw amino-acid sequence, 239 residues long: Serine protease SplC (239 aa).

Residues 1 to 36 (MNKNIVIKSMAALAILTSVTGINAAVVDETQQIANA) form the signal peptide. Active-site charge relay system residues include His-75, Asp-113, and Ser-193.

Belongs to the peptidase S1B family.

The protein resides in the secreted. This chain is Serine protease SplC (splC), found in Staphylococcus aureus (strain bovine RF122 / ET3-1).